The chain runs to 424 residues: UPF0597 protein Shewana3_2972 (424 aa).

The protein belongs to the UPF0597 family.

The protein is UPF0597 protein Shewana3_2972 of Shewanella sp. (strain ANA-3).